Here is a 533-residue protein sequence, read N- to C-terminus: Flavin-containing monooxygenase 5 (533 aa).

A Dimethylated arginine modification is found at R5. Residues 10 to 14, E33, and 41 to 42 each bind FAD; these read GAGAS and LW. S54 is subject to Phosphoserine. Y56 is subject to Phosphotyrosine. Position 58 is a phosphoserine (S58). 62–63 contributes to the FAD binding site; that stretch reads NT. NADP(+) is bound at residue 196–199; that stretch reads SGGD. S280 is modified (phosphoserine). T284 carries the post-translational modification Phosphothreonine. S401 bears the Phosphoserine mark. Residues 513 to 533 traverse the membrane as a helical segment; that stretch reads LVTVRVLMLAVAFFAVILAYF.

The protein belongs to the FMO family. FAD serves as cofactor. In terms of tissue distribution, expressed in liver (at protein level). Expressed in the mucosal epithelium of the gastrointestinal tract.

It localises to the microsome membrane. It is found in the endoplasmic reticulum membrane. The catalysed reaction is N,N-dimethylaniline + NADPH + O2 + H(+) = N,N-dimethylaniline N-oxide + NADP(+) + H2O. It carries out the reaction NADPH + O2 + H(+) = H2O2 + NADP(+). The enzyme catalyses heptan-2-one + NADPH + O2 + H(+) = pentyl acetate + NADP(+) + H2O. It catalyses the reaction octan-3-one + NADPH + O2 + H(+) = pentyl propanoate + NADP(+) + H2O. The catalysed reaction is octan-3-one + NADPH + O2 + H(+) = ethyl hexanoate + NADP(+) + H2O. It carries out the reaction hexan-3-one + NADPH + O2 + H(+) = ethyl butanoate + NADP(+) + H2O. The enzyme catalyses hexan-3-one + NADPH + O2 + H(+) = propyl propanoate + NADP(+) + H2O. It catalyses the reaction heptan-4-one + NADPH + O2 + H(+) = propyl butanoate + NADP(+) + H2O. The catalysed reaction is (2E)-geranial + NADPH + O2 + H(+) = (1E)-2,6-dimethylhepta-1,5-dien-1-yl formate + NADP(+) + H2O. It carries out the reaction sulcatone + NADPH + O2 + H(+) = 4-methylpent-3-en-1-yl acetate + NADP(+) + H2O. In terms of biological role, acts as a Baeyer-Villiger monooxygenase on a broad range of substrates. Catalyzes the insertion of an oxygen atom into a carbon-carbon bond adjacent to a carbonyl, which converts ketones to esters. Active on diverse carbonyl compounds, whereas soft nucleophiles are mostly non- or poorly reactive. In contrast with other forms of FMO it is non- or poorly active on 'classical' substrates such as drugs, pesticides, and dietary components containing soft nucleophilic heteroatoms. Able to oxidize drug molecules bearing a carbonyl group on an aliphatic chain, such as nabumetone and pentoxifylline. Also, in the absence of substrates, shows slow but yet significant NADPH oxidase activity. Acts as a positive modulator of cholesterol biosynthesis as well as glucose homeostasis, promoting metabolic aging via pleiotropic effects. The polypeptide is Flavin-containing monooxygenase 5 (Mus musculus (Mouse)).